The chain runs to 271 residues: Beta-lactamase (271 aa).

Ser46 acts as the Acyl-ester intermediate in catalysis. A substrate-binding site is contributed by 210–212 (KTG).

The protein belongs to the class-A beta-lactamase family. Monomer.

The catalysed reaction is a beta-lactam + H2O = a substituted beta-amino acid. In terms of biological role, hydrolyzes broad-spectrum beta-lactam antibiotics. Active against cephalosporins. This Proteus vulgaris protein is Beta-lactamase.